The following is a 457-amino-acid chain: Heme sensor protein HssS (457 aa).

Helical transmembrane passes span 9–29 and 164–184; these read IAIY…VLTN and TFLA…VIAS. The HAMP domain occupies 186–238; the sequence is YSIIRPVKKLKLATERLIDGDFETPIKQTRKDEIGTLQYHFNKMRESLGQVDQ. Residues 246–456 form the Histidine kinase domain; that stretch reads NVSHEIKTPL…TFTITLPNNS (211 aa). His249 bears the Phosphohistidine; by autocatalysis mark.

In terms of processing, autophosphorylated.

Its subcellular location is the cell membrane. The enzyme catalyses ATP + protein L-histidine = ADP + protein N-phospho-L-histidine.. Functionally, member of the two-component regulatory system HssS/HssR involved in intracellular heme homeostasis and tempering of staphylococcal virulence. HssS functions as a heme sensor histidine kinase which is autophosphorylated at a histidine residue and transfers its phosphate group to an aspartate residue of HssR. HssR/HssS activates the expression of hrtAB, an efflux pump, in response to extracellular heme, hemin, hemoglobin or blood. The polypeptide is Heme sensor protein HssS (hssS) (Staphylococcus aureus (strain MSSA476)).